Here is a 333-residue protein sequence, read N- to C-terminus: Lipoyl synthase (333 aa).

Residues 1–15 are compositionally biased toward polar residues; the sequence is MSTLVESPVPSNDSQ. Residues 1–34 are disordered; sequence MSTLVESPVPSNDSQAAAPAAYDPTQKQKSQAKT. [4Fe-4S] cluster contacts are provided by cysteine 80, cysteine 85, cysteine 91, cysteine 106, cysteine 110, cysteine 113, and serine 320. A Radical SAM core domain is found at 91–309; that stretch reads CFGKGTATFM…EREAYAMGFT (219 aa).

It belongs to the radical SAM superfamily. Lipoyl synthase family. The cofactor is [4Fe-4S] cluster.

The protein resides in the cytoplasm. The catalysed reaction is [[Fe-S] cluster scaffold protein carrying a second [4Fe-4S](2+) cluster] + N(6)-octanoyl-L-lysyl-[protein] + 2 oxidized [2Fe-2S]-[ferredoxin] + 2 S-adenosyl-L-methionine + 4 H(+) = [[Fe-S] cluster scaffold protein] + N(6)-[(R)-dihydrolipoyl]-L-lysyl-[protein] + 4 Fe(3+) + 2 hydrogen sulfide + 2 5'-deoxyadenosine + 2 L-methionine + 2 reduced [2Fe-2S]-[ferredoxin]. The protein operates within protein modification; protein lipoylation via endogenous pathway; protein N(6)-(lipoyl)lysine from octanoyl-[acyl-carrier-protein]: step 2/2. Functionally, catalyzes the radical-mediated insertion of two sulfur atoms into the C-6 and C-8 positions of the octanoyl moiety bound to the lipoyl domains of lipoate-dependent enzymes, thereby converting the octanoylated domains into lipoylated derivatives. The polypeptide is Lipoyl synthase (Bordetella bronchiseptica (strain ATCC BAA-588 / NCTC 13252 / RB50) (Alcaligenes bronchisepticus)).